Consider the following 515-residue polypeptide: Maturase K (515 aa).

The protein belongs to the intron maturase 2 family. MatK subfamily.

The protein localises to the plastid. It localises to the chloroplast. Functionally, usually encoded in the trnK tRNA gene intron. Probably assists in splicing its own and other chloroplast group II introns. In Zingiber officinale (Ginger), this protein is Maturase K.